The sequence spans 283 residues: Pantothenate synthetase (283 aa).

31–38 (MGALHDGH) provides a ligand contact to ATP. Residue H38 is the Proton donor of the active site. Q62 lines the (R)-pantoate pocket. Residue Q62 participates in beta-alanine binding. 148–151 (GKKD) is an ATP binding site. Position 154 (Q154) interacts with (R)-pantoate. ATP is bound by residues I177 and 185–188 (KSSR).

The protein belongs to the pantothenate synthetase family. In terms of assembly, homodimer.

The protein localises to the cytoplasm. It catalyses the reaction (R)-pantoate + beta-alanine + ATP = (R)-pantothenate + AMP + diphosphate + H(+). The protein operates within cofactor biosynthesis; (R)-pantothenate biosynthesis; (R)-pantothenate from (R)-pantoate and beta-alanine: step 1/1. Functionally, catalyzes the condensation of pantoate with beta-alanine in an ATP-dependent reaction via a pantoyl-adenylate intermediate. The sequence is that of Pantothenate synthetase from Oceanobacillus iheyensis (strain DSM 14371 / CIP 107618 / JCM 11309 / KCTC 3954 / HTE831).